Here is a 1009-residue protein sequence, read N- to C-terminus: Epididymis-specific alpha-mannosidase (1009 aa).

An N-terminal signal peptide occupies residues 1–23; that stretch reads MGQLCWLPLLAPLLLLRPPGVQS. Positions 36, 38, and 151 each coordinate Zn(2+). D151 acts as the Nucleophile in catalysis. N-linked (GlcNAc...) asparagine glycans are attached at residues N226, N249, N294, and N336. Residue H420 participates in Zn(2+) binding. 8 N-linked (GlcNAc...) asparagine glycosylation sites follow: N516, N608, N670, N675, N748, N808, N812, and N890. The disordered stretch occupies residues 972–991; the sequence is GPGRHRGDTTSPSRPPGGPI.

It belongs to the glycosyl hydrolase 38 family. Requires Zn(2+) as cofactor.

Its subcellular location is the secreted. The catalysed reaction is Hydrolysis of terminal, non-reducing alpha-D-mannose residues in alpha-D-mannosides.. The sequence is that of Epididymis-specific alpha-mannosidase (MAN2B2) from Homo sapiens (Human).